Here is a 326-residue protein sequence, read N- to C-terminus: tRNA-modifying protein YgfZ (326 aa).

The folate site is built by tryptophan 27 and tryptophan 189.

Belongs to the tRNA-modifying YgfZ family.

It localises to the cytoplasm. Its function is as follows. Folate-binding protein involved in regulating the level of ATP-DnaA and in the modification of some tRNAs. It is probably a key factor in regulatory networks that act via tRNA modification, such as initiation of chromosomal replication. The chain is tRNA-modifying protein YgfZ from Salmonella arizonae (strain ATCC BAA-731 / CDC346-86 / RSK2980).